The chain runs to 120 residues: uncharacterized protein (120 aa).

It to the N-terminal region of phage HK97/HK620 Gp37/hpaH.

This is an uncharacterized protein from Escherichia coli (strain K12).